Consider the following 399-residue polypeptide: Elongation factor Tu (399 aa).

The region spanning 10 to 209 is the tr-type G domain; it reads KPHVNIGTIG…EVDAYIPTPE (200 aa). The tract at residues 19–26 is G1; the sequence is GHVDHGKT. GTP is bound at residue 19-26; that stretch reads GHVDHGKT. Thr-26 is a binding site for Mg(2+). Residues 60–64 are G2; it reads GITIA. A G3 region spans residues 81-84; the sequence is DCPG. GTP is bound by residues 81-85 and 136-139; these read DCPGH and NKQD. The segment at 136–139 is G4; that stretch reads NKQD. A G5 region spans residues 174–176; that stretch reads SAL.

The protein belongs to the TRAFAC class translation factor GTPase superfamily. Classic translation factor GTPase family. EF-Tu/EF-1A subfamily. As to quaternary structure, monomer.

Its subcellular location is the cytoplasm. The catalysed reaction is GTP + H2O = GDP + phosphate + H(+). Its function is as follows. GTP hydrolase that promotes the GTP-dependent binding of aminoacyl-tRNA to the A-site of ribosomes during protein biosynthesis. This is Elongation factor Tu from Helicobacter pylori (strain Shi470).